We begin with the raw amino-acid sequence, 165 residues long: Cytochrome c-550-like protein (165 aa).

The signal sequence occupies residues 1 to 30 (MLNKSLLIRFVLTILIIVQVIIFDTQPVQA). Heme c contacts are provided by Cys75, Cys78, His79, and Cys129.

Belongs to the cytochrome c family. PsbV subfamily. Heme c serves as cofactor.

The protein resides in the cellular thylakoid membrane. In terms of biological role, possible low-potential cytochrome c. In Trichodesmium erythraeum (strain IMS101), this protein is Cytochrome c-550-like protein (psbV2).